Consider the following 590-residue polypeptide: MAGAVPGAIMDEDYYGSAAEWGDEADGGQQEDDSGEGEDDAEVQQECLHKFSTRDYIMEPSIFNTLKRYFQAGGSPENVIQLLSENYTAVAQTVNLLAEWLIQTGVEPVQVQETVENHLKSLLIKHFDPRKADSIFTEEGETPAWLEQMIAHTTWRDLFYKLAEAHPDCLMLNFTVKLISDAGYQGEITSVSTACQQLEVFSRVLRTSLATILDGGEENLEKNLPEFAKMVCHGEHTYLFAQAMMSVLAQEEQGGSAVRRIAQEVQRFAQEKGHDASQITLALGTAASYPRACQALGAMLSKGALNPADITVLFKMFTSMDPPPVELIRVPAFLDLFMQSLFKPGARINQDHKHKYIHILAYAASVVETWKKNKRVSINKDELKSTSKAVETVHNLCCNENKGASELVAELSTLYQCIRFPVVAMGVLKWVDWTVSEPRYFQLQTDHTPVHLALLDEISTCHQLLHPQVLQLLVKLFETEHSQLDVMEQLELKKTLLDRMVHLLSRGYVLPVVSYIRKCLEKLDTDISLIRYFVTEVLDVIAPPYTSDFVQLFLPILENDSIAGTIKTEGEHDPVTEFIAHCKSNFIMVN.

Residues 16-43 (GSAAEWGDEADGGQQEDDSGEGEDDAEV) form a disordered region. A compositionally biased stretch (acidic residues) spans 21–43 (WGDEADGGQQEDDSGEGEDDAEV).

The protein belongs to the NELF-D family. In terms of assembly, the NELF complex is composed of NELFA, NELFB, NELFCD (isoform NELF-C or isoform NELF-D) and NELFE; NELFA and NELFCD form a stable subcomplex that binds primarily through NELFCD to the N-terminus of NELFB. Binds RNA which may help to stabilize the NELF complex on nucleic acid. In vitro, the NELFA:NELFCD subcomplex binds to ssDNA and ssRNA in a sequence- and structure-dependent manner. Interacts with ARAF. Interacts with PCF11. Interacts with KAT8. As to expression, widely expressed. Expressed in heart, brain, lung, placenta, liver, skeletal and cardiac muscle, adrenal, thyroid, kidney and pancreas.

Its subcellular location is the nucleus. Its function is as follows. Essential component of the NELF complex, a complex that negatively regulates the elongation of transcription by RNA polymerase II. The NELF complex, which acts via an association with the DSIF complex and causes transcriptional pausing, is counteracted by the P-TEFb kinase complex. Functionally, (Microbial infection) The NELF complex is involved in HIV-1 latency possibly involving recruitment of PCF11 to paused RNA polymerase II. This is Negative elongation factor C/D (NELFCD) from Homo sapiens (Human).